The following is a 225-amino-acid chain: NAD(P)H-quinone oxidoreductase subunit K, chloroplastic (225 aa).

[4Fe-4S] cluster contacts are provided by Cys-43, Cys-44, Cys-108, and Cys-139.

The protein belongs to the complex I 20 kDa subunit family. As to quaternary structure, NDH is composed of at least 16 different subunits, 5 of which are encoded in the nucleus. It depends on [4Fe-4S] cluster as a cofactor.

The protein resides in the plastid. The protein localises to the chloroplast thylakoid membrane. The catalysed reaction is a plastoquinone + NADH + (n+1) H(+)(in) = a plastoquinol + NAD(+) + n H(+)(out). It catalyses the reaction a plastoquinone + NADPH + (n+1) H(+)(in) = a plastoquinol + NADP(+) + n H(+)(out). Its function is as follows. NDH shuttles electrons from NAD(P)H:plastoquinone, via FMN and iron-sulfur (Fe-S) centers, to quinones in the photosynthetic chain and possibly in a chloroplast respiratory chain. The immediate electron acceptor for the enzyme in this species is believed to be plastoquinone. Couples the redox reaction to proton translocation, and thus conserves the redox energy in a proton gradient. This chain is NAD(P)H-quinone oxidoreductase subunit K, chloroplastic, found in Nandina domestica (Heavenly bamboo).